Consider the following 198-residue polypeptide: MNLIPTVIEQTSRGERAYDIYSRLLKDRIIMLGSAIDDNVANSIVSQLLFLDAQDPEKDIFLYINSPGGSISAGMAIYDTMNFVKADVQTIGMGMAASMGSFLLTAGANGKRFALPNAEIMIHQPLGGAQGQATEIEIAARHILKIKERMNTIMAEKTGQPYEVIARDTDRDNFMTAQEAKDYGLIDDIIINKSGLKG.

Ser98 functions as the Nucleophile in the catalytic mechanism. His123 is a catalytic residue.

This sequence belongs to the peptidase S14 family. In terms of assembly, fourteen ClpP subunits assemble into 2 heptameric rings which stack back to back to give a disk-like structure with a central cavity, resembling the structure of eukaryotic proteasomes.

Its subcellular location is the cytoplasm. It catalyses the reaction Hydrolysis of proteins to small peptides in the presence of ATP and magnesium. alpha-casein is the usual test substrate. In the absence of ATP, only oligopeptides shorter than five residues are hydrolyzed (such as succinyl-Leu-Tyr-|-NHMec, and Leu-Tyr-Leu-|-Tyr-Trp, in which cleavage of the -Tyr-|-Leu- and -Tyr-|-Trp bonds also occurs).. In terms of biological role, cleaves peptides in various proteins in a process that requires ATP hydrolysis. Has a chymotrypsin-like activity. Plays a major role in the degradation of misfolded proteins. This Listeria monocytogenes serovar 1/2a (strain ATCC BAA-679 / EGD-e) protein is ATP-dependent Clp protease proteolytic subunit.